We begin with the raw amino-acid sequence, 463 residues long: A-type ATP synthase subunit B (463 aa).

Belongs to the ATPase alpha/beta chains family. Has multiple subunits with at least A(3), B(3), C, D, E, F, H, I and proteolipid K(x).

The protein resides in the cell membrane. Its function is as follows. Component of the A-type ATP synthase that produces ATP from ADP in the presence of a proton gradient across the membrane. The B chain is a regulatory subunit. This Aeropyrum pernix (strain ATCC 700893 / DSM 11879 / JCM 9820 / NBRC 100138 / K1) protein is A-type ATP synthase subunit B.